The primary structure comprises 370 residues: Peptide chain release factor 2 (370 aa).

Glutamine 249 carries the post-translational modification N5-methylglutamine.

Belongs to the prokaryotic/mitochondrial release factor family. Post-translationally, methylated by PrmC. Methylation increases the termination efficiency of RF2.

The protein resides in the cytoplasm. Functionally, peptide chain release factor 2 directs the termination of translation in response to the peptide chain termination codons UGA and UAA. This is Peptide chain release factor 2 from Kosmotoga olearia (strain ATCC BAA-1733 / DSM 21960 / TBF 19.5.1).